The chain runs to 107 residues: uncharacterized protein (107 aa).

A helical membrane pass occupies residues M37–V59.

The protein resides in the membrane. This is an uncharacterized protein from Saccharomyces cerevisiae (strain ATCC 204508 / S288c) (Baker's yeast).